A 338-amino-acid chain; its full sequence is tRNA N6-adenosine threonylcarbamoyltransferase (338 aa).

Residues histidine 111 and histidine 115 each contribute to the Fe cation site. Residues 134-138 (LLSGG), aspartate 167, glycine 180, and asparagine 275 contribute to the substrate site. Aspartate 304 provides a ligand contact to Fe cation.

This sequence belongs to the KAE1 / TsaD family. Fe(2+) is required as a cofactor.

The protein localises to the cytoplasm. The enzyme catalyses L-threonylcarbamoyladenylate + adenosine(37) in tRNA = N(6)-L-threonylcarbamoyladenosine(37) in tRNA + AMP + H(+). Functionally, required for the formation of a threonylcarbamoyl group on adenosine at position 37 (t(6)A37) in tRNAs that read codons beginning with adenine. Is involved in the transfer of the threonylcarbamoyl moiety of threonylcarbamoyl-AMP (TC-AMP) to the N6 group of A37, together with TsaE and TsaB. TsaD likely plays a direct catalytic role in this reaction. The polypeptide is tRNA N6-adenosine threonylcarbamoyltransferase (Leptospira borgpetersenii serovar Hardjo-bovis (strain JB197)).